The chain runs to 437 residues: O-methyltransferase 3 (437 aa).

The segment at 1-21 is disordered; sequence MNNKTSNGDITNDEPTVGSKR. A coiled-coil region spans residues 146 to 180; sequence SDNLYQDKDDLEKQEKEREKKMANLLSKNVDIKEL. The interval 408 to 437 is disordered; sequence DPINNNNNNNNNNNNNNNNTTTTTSTTTTN. The segment covering 411–437 has biased composition (low complexity); sequence NNNNNNNNNNNNNNNNTTTTTSTTTTN.

This sequence belongs to the methyltransferase superfamily. METL family.

Functionally, probable methyltransferase. The chain is O-methyltransferase 3 (omt3) from Dictyostelium discoideum (Social amoeba).